A 176-amino-acid chain; its full sequence is 2-C-methyl-D-erythritol 2,4-cyclodiphosphate synthase (176 aa).

Residues aspartate 23, histidine 25, and histidine 60 each contribute to the a divalent metal cation site. Aspartate 23–histidine 25 is a 4-CDP-2-C-methyl-D-erythritol 2-phosphate binding site. Position 149 to 152 (threonine 149 to glutamate 152) interacts with 4-CDP-2-C-methyl-D-erythritol 2-phosphate.

The protein belongs to the IspF family. As to quaternary structure, homotrimer. It depends on a divalent metal cation as a cofactor.

It carries out the reaction 4-CDP-2-C-methyl-D-erythritol 2-phosphate = 2-C-methyl-D-erythritol 2,4-cyclic diphosphate + CMP. Its pathway is isoprenoid biosynthesis; isopentenyl diphosphate biosynthesis via DXP pathway; isopentenyl diphosphate from 1-deoxy-D-xylulose 5-phosphate: step 4/6. Involved in the biosynthesis of isopentenyl diphosphate (IPP) and dimethylallyl diphosphate (DMAPP), two major building blocks of isoprenoid compounds. Catalyzes the conversion of 4-diphosphocytidyl-2-C-methyl-D-erythritol 2-phosphate (CDP-ME2P) to 2-C-methyl-D-erythritol 2,4-cyclodiphosphate (ME-CPP) with a corresponding release of cytidine 5-monophosphate (CMP). This chain is 2-C-methyl-D-erythritol 2,4-cyclodiphosphate synthase, found in Chlamydia caviae (strain ATCC VR-813 / DSM 19441 / 03DC25 / GPIC) (Chlamydophila caviae).